We begin with the raw amino-acid sequence, 89 residues long: DNA maturase A (89 aa).

In terms of assembly, gp18 and gp19 associate with DNA and prohead.

Functionally, during the growth of this phage, DNA is synthesized as concatemers. During DNA packaging mature monomers are cut from the concatemers. The chain is DNA maturase A (18) from Enterobacteria phage T3 (Bacteriophage T3).